We begin with the raw amino-acid sequence, 319 residues long: Melanoma-associated antigen B2 (319 aa).

Positions 1–17 (MPRGQKSKLRAREKRRK) are enriched in basic residues. The disordered stretch occupies residues 1–112 (MPRGQKSKLR…TKSPSEDPLT (112 aa)). 3 stretches are compositionally biased toward low complexity: residues 39 to 57 (PCCSSSVSGGAASSSPAAG), 67 to 79 (TTAAAAAAGVSST), and 94 to 105 (ASSSQASTSTKS). Residues S77 and S105 each carry the phosphoserine modification. The 200-residue stretch at 111 to 310 (LTRKSGSLVQ…CAFPTHYEEA (200 aa)) folds into the MAGE domain.

In terms of assembly, interacts with TRIM28. Expressed in testis and placenta, and in a significant fraction of tumors of various histologic types.

May enhance ubiquitin ligase activity of RING-type zinc finger-containing E3 ubiquitin-protein ligases. Proposed to act through recruitment and/or stabilization of the Ubl-conjugating enzyme (E2) at the E3:substrate complex. This chain is Melanoma-associated antigen B2 (MAGEB2), found in Homo sapiens (Human).